A 180-amino-acid chain; its full sequence is CD-NTase/cGAS isopeptidase (180 aa).

One can recognise an MPN domain in the interval 33-165 (IVISSSTIEQ…AGSYSLSASV (133 aa)). Catalysis depends on E54, which acts as the Proton donor/acceptor. Residues H115, H117, and D128 each coordinate Zn(2+).

Belongs to the peptidase M67B family. Cap3 isopeptidase subfamily.

In terms of biological role, metalloprotease priming reversal component of a CBASS antivirus system. CBASS (cyclic oligonucleotide-based antiphage signaling system) provides immunity against bacteriophages. The CD-NTase protein (CdnD) synthesizes cyclic nucleotides in response to infection; these serve as specific second messenger signals. The signals activate a diverse range of effectors, leading to bacterial cell death and thus abortive phage infection. A type II-C(AAG) CBASS system. Reverses the primed state of DncV, the CD-NTase. Cleaves a CdnD-GFP (green fluorescent protein) fusion protein precisely at the C-terminus of CdnD. Overexpression decreases the efficacy of CBASS protection against phage T2. Antagonism of phage defense upon overexpression is CBASS-system specific, Cap3 from this bacteria only antagonizes its cognate CBASS system and not that of C.freundii, E.coli or V.cholerae. Functionally, protects E.coli against phage T2 infection. When the cdnD-cap2-cap3-cap4 operon is introduced in E.coli there is a more than 10(3) decrease in the efficiency of T2 plaque formation. The operon does not protect against phage T5 and only about 10-fold against T7. This Enterobacter hormaechei subsp. hoffmannii (strain UCI 50) protein is CD-NTase/cGAS isopeptidase.